The following is a 259-amino-acid chain: Haloacid dehalogenase-like hydrolase domain-containing protein 2 (259 aa).

Residues aspartate 13 and serine 15 each coordinate Mg(2+). Substrate-binding positions include 13–15 (DLS) and 46–47 (TN). Positions 49–71 (TKESKRDLLERLRKLEFDISEEE) form a coiled coil. Residue lysine 50 is modified to N6-succinyllysine. Lysine 179 is a binding site for substrate. Aspartate 204 is a Mg(2+) binding site.

It belongs to the HAD-like hydrolase superfamily. Mg(2+) is required as a cofactor.

The polypeptide is Haloacid dehalogenase-like hydrolase domain-containing protein 2 (Hdhd2) (Rattus norvegicus (Rat)).